The following is a 60-amino-acid chain: Cytotoxin 5 (60 aa).

Intrachain disulfides connect Cys-3–Cys-21, Cys-14–Cys-38, Cys-42–Cys-53, and Cys-54–Cys-59.

It belongs to the three-finger toxin family. Short-chain subfamily. Type IA cytotoxin sub-subfamily. Monomer in solution; Homodimer and oligomer in the presence of negatively charged lipids forming a pore with a size ranging between 20 and 30 Angstroms. As to expression, expressed by the venom gland.

The protein localises to the secreted. It is found in the target cell membrane. Its function is as follows. Shows cytolytic activity on many different cells by forming pore in lipid membranes. In vivo, increases heart rate or kills the animal by cardiac arrest. In addition, it binds to heparin with high affinity, interacts with Kv channel-interacting protein 1 (KCNIP1) in a calcium-independent manner, and binds to integrin alpha-V/beta-3 (ITGAV/ITGB3) with moderate affinity. The chain is Cytotoxin 5 from Naja mossambica (Mozambique spitting cobra).